The following is a 959-amino-acid chain: Leucine--tRNA ligase (959 aa).

A 'HIGH' region motif is present at residues 39–49 (PYVNAYPHLGS). Residues 637–641 (KMSKS) carry the 'KMSKS' region motif. Position 640 (Lys640) interacts with ATP. Residues 933–959 (TEEDGGSPRRANALPGRPALYAEKRGG) are disordered.

This sequence belongs to the class-I aminoacyl-tRNA synthetase family.

Its subcellular location is the cytoplasm. It carries out the reaction tRNA(Leu) + L-leucine + ATP = L-leucyl-tRNA(Leu) + AMP + diphosphate. This is Leucine--tRNA ligase from Aeropyrum pernix (strain ATCC 700893 / DSM 11879 / JCM 9820 / NBRC 100138 / K1).